The chain runs to 497 residues: Putative zinc finger and SCAN domain-containing protein 5D (497 aa).

The 83-residue stretch at 41–123 folds into the SCAN box domain; the sequence is KAGRRMFSCP…DLLRNNRRPK (83 aa). The segment at 148–342 is disordered; the sequence is PASVRDDPRG…GPAGAVSHPN (195 aa). The span at 158 to 167 shows a compositional bias: polar residues; that stretch reads VSSQRASSVN. 2 stretches are compositionally biased toward basic and acidic residues: residues 216-229 and 249-259; these read PTLE…REEN and KEGKEPKKRAS. 5 C2H2-type zinc fingers span residues 352–374, 380–402, 408–430, 436–458, and 464–486; these read FACG…MRSH, FQCN…QRIH, YTCD…KRSH, YKCK…KLIH, and YKCP…QKTH.

The protein resides in the nucleus. In Homo sapiens (Human), this protein is Putative zinc finger and SCAN domain-containing protein 5D.